Consider the following 170-residue polypeptide: Brassinosteroid-responsive RING protein 1 (170 aa).

A helical membrane pass occupies residues 15–37 (LFVQTLSILGFIRTIVFSIFRFL). Residues 94–137 (CAVCLYEFEGEQEIRWLRNCRHIFHRSCLDRWMDHDQKTCPLCR) form an RING-type; atypical zinc finger.

It belongs to the RING-type zinc finger family. Highly expressed in stems, rosette leaves and siliques, and moderately expressed in roots, cauline leaves and flower. Detected at low levels in seeds.

The protein localises to the membrane. In terms of biological role, may be involved in the brassinosteroids (BRs) signaling pathway and regulate the growth and development of rosette leaves. Seems to prevent over development of leaves and inflorescence stems. This chain is Brassinosteroid-responsive RING protein 1, found in Arabidopsis thaliana (Mouse-ear cress).